A 124-amino-acid chain; its full sequence is Small ribosomal subunit protein uS12 (124 aa).

The interval 1 to 25 (MATINQLVRKPRQATTYKSASPALD) is disordered. D89 is modified (3-methylthioaspartic acid).

The protein belongs to the universal ribosomal protein uS12 family. In terms of assembly, part of the 30S ribosomal subunit. Contacts proteins S8 and S17. May interact with IF1 in the 30S initiation complex.

Functionally, with S4 and S5 plays an important role in translational accuracy. Its function is as follows. Interacts with and stabilizes bases of the 16S rRNA that are involved in tRNA selection in the A site and with the mRNA backbone. Located at the interface of the 30S and 50S subunits, it traverses the body of the 30S subunit contacting proteins on the other side and probably holding the rRNA structure together. The combined cluster of proteins S8, S12 and S17 appears to hold together the shoulder and platform of the 30S subunit. The sequence is that of Small ribosomal subunit protein uS12 from Stenotrophomonas maltophilia (strain R551-3).